The chain runs to 962 residues: Leucine-rich repeat-containing G-protein coupled receptor 6 (962 aa).

Positions 1-16 are cleaved as a signal peptide; it reads MLVVLLILHAVSCAHS. The LRRNT domain occupies 20–60; it reads PGAAVPVKQCPSACQCEEDGILLLVDCSEQGLSSVPTDLSP. LRR repeat units lie at residues 38 to 58, 59 to 82, 83 to 106, 107 to 131, 133 to 154, 155 to 178, 179 to 202, 203 to 226, 228 to 250, 251 to 273, 275 to 297, 298 to 321, 322 to 344, 345 to 368, 370 to 390, 391 to 414, and 416 to 438; these read DGIL…PTDL, SPLT…AFRN, LHFL…MLQG, LYNL…PWEL, NLLS…TLSG, MRSL…ALND, LSSL…AFRN, LSNL…CFEG, HSLE…IRTL, AKLQ…AFVG, PLLQ…AFQF, LPKL…LKGT, TSLQ…LCHL, LPKL…YHCT, LQEI…TFQQ, LGSL…AFFS, and QSLI…GLTS. A glycan (N-linked (GlcNAc...) asparagine) is linked at Asn71. N-linked (GlcNAc...) asparagine glycosylation is present at Asn202. 7 helical membrane-spanning segments follow: residues 559–579, 590–610, 647–669, 679–699, 723–743, 766–786, and 801–821; these read GMWL…LTVF, FIIG…GTLA, SILF…RAYG, AAAV…LIGV, FMVA…GTYI, VAWL…LTFS, and SVVL…YLLF. Cys633 and Cys708 are disulfide-bonded.

It belongs to the G-protein coupled receptor 1 family.

It localises to the cell membrane. Receptor for R-spondins that potentiates the canonical Wnt signaling pathway. Upon binding to R-spondins (rspo1, rspo2, rspo3 or rspo4), associates with phosphorylated lrp6 and frizzled receptors that are activated by extracellular Wnt receptors, triggering the canonical Wnt signaling pathway to increase expression of target genes. In contrast to classical G-protein coupled receptors, does not activate heterotrimeric G-proteins to transduce the signal. This Danio rerio (Zebrafish) protein is Leucine-rich repeat-containing G-protein coupled receptor 6 (lgr6).